Reading from the N-terminus, the 628-residue chain is (+)-alpha pinene synthase 1, chloroplastic (628 aa).

Residues 1 to 18 (MALVSAVPLNSKLCLCRT) constitute a chloroplast transit peptide. Residues Asp-379, Asp-383, and Asp-531 each coordinate Mg(2+). A DDXXD motif motif is present at residues 379-383 (DDIYD).

It belongs to the terpene synthase family. Tpsd subfamily. Mg(2+) serves as cofactor. The cofactor is Mn(2+).

It is found in the plastid. The protein resides in the chloroplast. It carries out the reaction (2E)-geranyl diphosphate = (1R,5R)-alpha-pinene + diphosphate. It functions in the pathway terpene metabolism; oleoresin biosynthesis. Its pathway is secondary metabolite biosynthesis; terpenoid biosynthesis. In terms of biological role, monoterpene synthase (TPS) involved in the biosynthesis of monoterpene natural products included in conifer oleoresin secretions and volatile emissions; these compounds contribute to biotic and abiotic stress defense against herbivores and pathogens. Catalyzes the conversion of (2E)-geranyl diphosphate (GPP) to (+)-alpha-pinene. In Pinus banksiana (Jack pine), this protein is (+)-alpha pinene synthase 1, chloroplastic.